Here is a 194-residue protein sequence, read N- to C-terminus: Isopentenyl-diphosphate Delta-isomerase (194 aa).

2 residues coordinate Mn(2+): His27 and His34. In terms of domain architecture, Nudix hydrolase spans 32 to 166 (ALHLAFSCHV…PWAFSPWLTL (135 aa)). The active site involves Cys69. His71 serves as a coordination point for Mn(2+). Glu89 provides a ligand contact to Mg(2+). Mn(2+) is bound by residues Glu116 and Glu118. The active site involves Glu118.

The protein belongs to the IPP isomerase type 1 family. Mg(2+) is required as a cofactor. Requires Mn(2+) as cofactor.

The protein resides in the cytoplasm. It carries out the reaction isopentenyl diphosphate = dimethylallyl diphosphate. It functions in the pathway isoprenoid biosynthesis; dimethylallyl diphosphate biosynthesis; dimethylallyl diphosphate from isopentenyl diphosphate: step 1/1. Catalyzes the 1,3-allylic rearrangement of the homoallylic substrate isopentenyl (IPP) to its highly electrophilic allylic isomer, dimethylallyl diphosphate (DMAPP). In Clavibacter michiganensis subsp. michiganensis (strain NCPPB 382), this protein is Isopentenyl-diphosphate Delta-isomerase.